Here is a 372-residue protein sequence, read N- to C-terminus: Hydrogenase-1 small chain (372 aa).

Positions 1-45 form a signal peptide, tat-type signal; sequence MNNEETFYQAMRRQGVTRRSFLKYCSLAATSLGLGAGMAPKIAWA. Over 46 to 325 the chain is Periplasmic; the sequence is LENKPRIPVV…PQMGTHSTAD (280 aa). Residues C62, C65, C160, C194, H232, C235, C260, and C266 each coordinate [4Fe-4S] cluster. Residues C275, C294, and C297 each contribute to the [3Fe-4S] cluster site. The chain crosses the membrane as a helical span at residues 326-346; the sequence is TVGLTALGVVAAAVGVHAVAS. The tract at residues 346 to 372 is disordered; that stretch reads SSVDQRRRHNQQPTETEHQPGNEDKQA. The Cytoplasmic portion of the chain corresponds to 347 to 372; it reads SVDQRRRHNQQPTETEHQPGNEDKQA. Positions 360–372 are enriched in basic and acidic residues; it reads ETEHQPGNEDKQA.

This sequence belongs to the [NiFe]/[NiFeSe] hydrogenase small subunit family. In terms of assembly, heterodimer of a large and a small subunit. [4Fe-4S] cluster serves as cofactor. The cofactor is [3Fe-4S] cluster. In terms of processing, predicted to be exported by the Tat system. The position of the signal peptide cleavage has not been experimentally proven.

It is found in the cell inner membrane. It catalyses the reaction H2 + A = AH2. Functionally, this is one of three S.flexneri hydrogenases synthesized in response to different physiological conditions. HYD1 is believed to have a role in hydrogen cycling during fermentative growth. The sequence is that of Hydrogenase-1 small chain (hyaA) from Shigella flexneri.